Reading from the N-terminus, the 638-residue chain is DNA repair protein rhp41 (638 aa).

This sequence belongs to the XPC family.

Its subcellular location is the nucleus. Functionally, has a role in the nucleotide excision repair (NER) pathway. Acts in both transcription-coupled repair (TCR) which removes damage from the transcribed strand of active genes and in global genome repair (GGR) which removes damage in untranscribed DNA. Involved in the repair of UV-induced damages where it is involved in the removal of cyclobutane pyrimidine dimers (CPDs). The chain is DNA repair protein rhp41 (rhp41) from Schizosaccharomyces pombe (strain 972 / ATCC 24843) (Fission yeast).